Consider the following 477-residue polypeptide: Ubiquitin carboxyl-terminal hydrolase 7 (477 aa).

One can recognise a Ubiquitin-like domain in the interval L2 to I77. One can recognise a USP domain in the interval A104–R473. The Nucleophile role is filled by C113. The segment at M171–G190 is calmodulin-binding. Positions Q364–S401 are disordered. Residues S371–D380 show a composition bias toward basic and acidic residues. Positions E382–G399 are enriched in polar residues. The active-site Proton acceptor is H425.

Belongs to the peptidase C19 family. In terms of assembly, interacts with calmodulin (CaM).

The catalysed reaction is Thiol-dependent hydrolysis of ester, thioester, amide, peptide and isopeptide bonds formed by the C-terminal Gly of ubiquitin (a 76-residue protein attached to proteins as an intracellular targeting signal).. Its function is as follows. Recognizes and hydrolyzes the peptide bond at the C-terminal Gly of ubiquitin. Involved in the processing of poly-ubiquitin precursors as well as that of ubiquitinated proteins. This is Ubiquitin carboxyl-terminal hydrolase 7 (UBP7) from Arabidopsis thaliana (Mouse-ear cress).